We begin with the raw amino-acid sequence, 593 residues long: Proteasome-associated ATPase (593 aa).

The stretch at 23–95 (LLSQISYLEE…LKEEVDRLGQ (73 aa)) forms a coiled coil. 282-287 (GCGKTL) provides a ligand contact to ATP. Residues 592 to 593 (YL) are docks into pockets in the proteasome alpha-ring.

This sequence belongs to the AAA ATPase family. In terms of assembly, homohexamer. Assembles into a hexameric ring structure that caps the 20S proteasome core. Strongly interacts with the prokaryotic ubiquitin-like protein Pup through a hydrophobic interface; the interacting region of ARC lies in its N-terminal coiled-coil domain. There is one Pup binding site per ARC hexamer ring. Upon ATP-binding, the C-terminus of ARC interacts with the alpha-rings of the proteasome core, possibly by binding to the intersubunit pockets.

It participates in protein degradation; proteasomal Pup-dependent pathway. Its function is as follows. ATPase which is responsible for recognizing, binding, unfolding and translocation of pupylated proteins into the bacterial 20S proteasome core particle. May be essential for opening the gate of the 20S proteasome via an interaction with its C-terminus, thereby allowing substrate entry and access to the site of proteolysis. Thus, the C-termini of the proteasomal ATPase may function like a 'key in a lock' to induce gate opening and therefore regulate proteolysis. The chain is Proteasome-associated ATPase from Geodermatophilus obscurus (strain ATCC 25078 / DSM 43160 / JCM 3152 / CCUG 61914 / KCC A-0152 / KCTC 9177 / NBRC 13315 / NRRL B-3577 / G-20).